The sequence spans 296 residues: AUGMIN subunit 2 (296 aa).

Coiled coils occupy residues 56 to 83 (DDLI…QGRK) and 253 to 285 (AVHK…NRRL). The disordered stretch occupies residues 218-296 (AVSLPTTPGG…WPPSVKKSSV (79 aa)). The segment covering 264–277 (QNEEEEEEEEEEDG) has biased composition (acidic residues).

This sequence belongs to the HAUS2 family. In terms of assembly, part of the augmin complex composed of 8 subunits. The complex acts on microtubules and interacts with gamma-tubulin in spindles and the phragmoplast.

Functionally, contributes to the assembly of the acentrosomal spindle and phragmoplast microtubule arrays as part of the augmin complex. In Arabidopsis thaliana (Mouse-ear cress), this protein is AUGMIN subunit 2.